A 207-amino-acid chain; its full sequence is D-aminoacyl-tRNA deacylase 1 (207 aa).

The Gly-cisPro motif, important for rejection of L-amino acids motif lies at 139-140; the sequence is GP. The tract at residues 142-207 is disordered; that stretch reads TIQLESPPAP…EGDVSSEREP (66 aa). Composition is skewed to basic and acidic residues over residues 156–167 and 178–189; these read LLSKQEKQQQRK and SSREKAAQRSKV.

It belongs to the DTD family. In terms of assembly, homodimer.

The protein localises to the cytoplasm. It carries out the reaction a D-aminoacyl-tRNA + H2O = a tRNA + a D-alpha-amino acid + H(+). It catalyses the reaction glycyl-tRNA(Ala) + H2O = tRNA(Ala) + glycine + H(+). Functionally, D-aminoacyl-tRNA deacylase, with no observable activity on tRNAs charged with their cognate L-amino acid. Hydrolyzes correctly charged, achiral, glycyl-tRNA(Gly). Deacylates mischarged D.melanogaster and E.coli glycyl-tRNA(Ala), protecting cells against glycine mischarging by AlaRS. Acts via tRNA-based rather than protein-based catalysis; rejects L-amino acids rather than detecting D-amino acids in the active site. By recycling D-aminoacyl-tRNA to D-amino acids and free tRNA molecules, this enzyme counteracts the toxicity associated with the formation of D-aminoacyl-tRNA entities in vivo and helps enforce protein L-homochirality. This is D-aminoacyl-tRNA deacylase 1 from Danio rerio (Zebrafish).